A 502-amino-acid chain; its full sequence is Glycerol kinase (502 aa).

Thr14 is a binding site for ADP. Residues Thr14, Thr15, and Ser16 each coordinate ATP. Sn-glycerol 3-phosphate is bound at residue Thr14. Arg18 provides a ligand contact to ADP. Residues Arg84, Glu85, Tyr136, and Asp246 each coordinate sn-glycerol 3-phosphate. Residues Arg84, Glu85, Tyr136, Asp246, and Gln247 each coordinate glycerol. 2 residues coordinate ADP: Thr268 and Gly311. ATP contacts are provided by Thr268, Gly311, Gln315, and Gly412. ADP is bound by residues Gly412 and Asn416.

This sequence belongs to the FGGY kinase family. As to quaternary structure, homotetramer and homodimer (in equilibrium). Heterodimer with EIIA-Glc. Binds 1 zinc ion per glycerol kinase EIIA-Glc dimer. The zinc ion is important for dimerization.

The catalysed reaction is glycerol + ATP = sn-glycerol 3-phosphate + ADP + H(+). The protein operates within polyol metabolism; glycerol degradation via glycerol kinase pathway; sn-glycerol 3-phosphate from glycerol: step 1/1. Its activity is regulated as follows. Activity of this regulatory enzyme is affected by several metabolites. Allosterically and non-competitively inhibited by fructose 1,6-bisphosphate (FBP) and unphosphorylated phosphocarrier protein EIIA-Glc (III-Glc), an integral component of the bacterial phosphotransferase (PTS) system. Key enzyme in the regulation of glycerol uptake and metabolism. Catalyzes the phosphorylation of glycerol to yield sn-glycerol 3-phosphate. The protein is Glycerol kinase of Salmonella heidelberg (strain SL476).